Here is a 158-residue protein sequence, read N- to C-terminus: uncharacterized protein (158 aa).

Residues A77–K132 are disordered. Residues S100–K120 are compositionally biased toward basic residues.

This is an uncharacterized protein from Acanthamoeba polyphaga mimivirus (APMV).